The chain runs to 85 residues: Double gene block protein 2 (85 aa).

At 1-2 (MK) the chain is on the lumenal side. The chain crosses the membrane as a helical span at residues 3–23 (VLLVTGVLGLLLLIKWKSQST). Residues 24 to 36 (STSNQTCQCPTSP) lie on the Cytoplasmic side of the membrane. The helical transmembrane segment at 37–56 (WVIYAFYNSLSLVLLLCHLI) threads the bilayer. Over 57-85 (PEIKPIHTSYNTHDSSKQQHISINTGNGK) the chain is Lumenal.

It belongs to the carmovirus double gene block protein 2 family.

It localises to the host endoplasmic reticulum membrane. Cell-to-cell movement function. The protein is Double gene block protein 2 of Turnip crinkle virus (TCV).